Reading from the N-terminus, the 116-residue chain is Large ribosomal subunit protein uL18 (116 aa).

It belongs to the universal ribosomal protein uL18 family. In terms of assembly, part of the 50S ribosomal subunit; part of the 5S rRNA/L5/L18/L25 subcomplex. Contacts the 5S and 23S rRNAs.

Its function is as follows. This is one of the proteins that bind and probably mediate the attachment of the 5S RNA into the large ribosomal subunit, where it forms part of the central protuberance. The sequence is that of Large ribosomal subunit protein uL18 from Shewanella sediminis (strain HAW-EB3).